A 227-amino-acid polypeptide reads, in one-letter code: Homeobox protein HD-10 (227 aa).

The segment at residues 30 to 89 is a DNA-binding region (homeobox); sequence FVKHRKRTTKAQLKVLEETFETNIRPDANMRKKLGEQLGMTPRSVQVWFQNRRAKIKKLT. Residues 88–115 form a disordered region; the sequence is LTQKKMMQQENTDNTKGPDAAHGSSSPK. The span at 92-102 shows a compositional bias: polar residues; sequence KMMQQENTDNT.

The protein localises to the nucleus. The polypeptide is Homeobox protein HD-10 (HD-10) (Encephalitozoon cuniculi (strain GB-M1) (Microsporidian parasite)).